A 458-amino-acid chain; its full sequence is Ribulose bisphosphate carboxylase (458 aa).

A substrate-binding site is contributed by asparagine 111. The active-site Proton acceptor is lysine 166. Lysine 168 provides a ligand contact to substrate. Mg(2+)-binding residues include lysine 191, aspartate 193, and glutamate 194. Position 191 is an N6-carboxylysine (lysine 191). Residue histidine 287 is the Proton acceptor of the active site. Arginine 288, histidine 321, and serine 368 together coordinate substrate.

The protein belongs to the RuBisCO large chain family. Type II subfamily. As to quaternary structure, homodimer. Requires Mg(2+) as cofactor.

It carries out the reaction 2 (2R)-3-phosphoglycerate + 2 H(+) = D-ribulose 1,5-bisphosphate + CO2 + H2O. It catalyses the reaction D-ribulose 1,5-bisphosphate + O2 = 2-phosphoglycolate + (2R)-3-phosphoglycerate + 2 H(+). RuBisCO catalyzes two reactions: the carboxylation of D-ribulose 1,5-bisphosphate, the primary event in carbon dioxide fixation, as well as the oxidative fragmentation of the pentose substrate. Both reactions occur simultaneously and in competition at the same active site. In Rhodobacter capsulatus (Rhodopseudomonas capsulata), this protein is Ribulose bisphosphate carboxylase (cbbM).